The chain runs to 319 residues: Acetyl esterase (319 aa).

Residues 91–93 (HGG) carry the Involved in the stabilization of the negatively charged intermediate by the formation of the oxyanion hole motif. Residues serine 165, aspartate 262, and histidine 292 contribute to the active site.

Belongs to the 'GDXG' lipolytic enzyme family. As to quaternary structure, homodimer. Interacts with MalT and MelA.

The protein resides in the cytoplasm. Displays esterase activity towards short chain fatty esters (acyl chain length of up to 8 carbons). Able to hydrolyze triacetylglycerol (triacetin) and tributyrylglycerol (tributyrin), but not trioleylglycerol (triolein) or cholesterol oleate. Negatively regulates MalT activity by antagonizing maltotriose binding. Inhibits MelA galactosidase activity. This Escherichia coli O8 (strain IAI1) protein is Acetyl esterase.